The following is a 402-amino-acid chain: Serine/threonine-protein kinase US3 homolog (402 aa).

2 disordered regions span residues 1 to 21 (MSST…KVHD) and 46 to 88 (FPDS…SPET). Residues 102–386 (YNIVSSLPPG…AQDILMLPLF (285 aa)) form the Protein kinase domain. ATP is bound by residues 110-118 (PGSEGYIYV) and Lys127. Asp218 functions as the Proton acceptor in the catalytic mechanism.

It belongs to the protein kinase superfamily. Ser/Thr protein kinase family. In terms of processing, phosphorylated by UL13 homolog; this phosphorylation regulates subsequent phosphorylation of UL31 and UL34 homologs by US3. Autophosphorylated.

The protein resides in the host cytoplasm. It is found in the host nucleus. The enzyme catalyses L-seryl-[protein] + ATP = O-phospho-L-seryl-[protein] + ADP + H(+). It carries out the reaction L-threonyl-[protein] + ATP = O-phospho-L-threonyl-[protein] + ADP + H(+). In terms of biological role, multifunctional serine/threonine kinase that plays a role in several processes including egress of virus particles from the nucleus, modulation of the actin cytoskeleton and inhibition of apoptosis. Phosphorylates UL31 and UL34 homologs, two critical regulators of capsid budding from nucleus to endoplasmic reticulum, thereby facilitating virion egress. Modulates and redistributes host components of the nuclear envelope, including LMNA, emerin/EMD and the nuclear matrix protein MATR3. Phosphorylates envelope glycoprotein B (gB), probably to direct it to the cell surface. Promotes virus intracellular spread by restructuring host cell cytoskeleton. Blocks host apoptosis to extend cell survival and allow efficient viral replication. Promotes viral gene expression by phosphorylating host HDAC2 to reduce viral genome silencing. The polypeptide is Serine/threonine-protein kinase US3 homolog (US1206) (Gallid herpesvirus 2 (strain GA) (GaHV-2)).